A 756-amino-acid chain; its full sequence is Cartilage oligomeric matrix protein (756 aa).

A signal peptide spans 1-20 (MVLAAARVLLLTLAALGASG). A COMP N-terminal region spans residues 22–85 (GQMPLGGDLG…PARTPKLTVR (64 aa)). In terms of domain architecture, EGF-like 1 spans 86-125 (PLSQCSPGFCFPGVACTETANGARCGPCPEGFTGNGSHCA). Disulfide bonds link Cys-90/Cys-101, Cys-95/Cys-110, Cys-113/Cys-124, Cys-130/Cys-141, Cys-135/Cys-150, Cys-183/Cys-196, Cys-190/Cys-205, Cys-228/Cys-242, Cys-236/Cys-252, and Cys-254/Cys-265. Residue Asn-120 is glycosylated (N-linked (GlcNAc...) asparagine). One can recognise an EGF-like 2; calcium-binding domain in the interval 126–178 (DVNECTAHPCFPRVRCINTSPGFRCEACPPGFSGPTHEGVGLAFAKANKQVCT). The 40-residue stretch at 179–218 (DINECETGQHNCVPNSVCVNTVGSFQCGPCQPGFVGDQAS) folds into the EGF-like 3; calcium-binding domain. The EGF-like 4 domain occupies 224–266 (PQRFCPDGTPSPCHEKADCVLERDGSRSCVCAVGWAGNGLICG). TSP type-3 repeat units follow at residues 267-299 (RDTD…NSGQ), 300-335 (EDVD…NPDQ), 336-358 (RNTD…NDDQ), 359-394 (KDTD…NSDQ), 395-417 (KDTD…NADQ), 418-455 (RDVD…NSAQ), 456-491 (QDSD…NPGQ), and 492-527 (EDMD…EVTL). Residues 322–502 (NEKDNCPLVR…DMDRDGVGDA (181 aa)) form a disordered region. Basic and acidic residues-rich tracts occupy residues 333 to 345 (PDQR…KWGD), 351 to 369 (RSQK…RGDA), and 415 to 425 (ADQRDVDHDFV). The short motif at 366 to 368 (RGD) is the Cell attachment site element. Over residues 466–475 (ACDDDDDNDG) the composition is skewed to acidic residues. The interval 526–756 (TLTDFRAFQT…DYEAQRLLQA (231 aa)) is mediates cell survival and induction of the IAP family of survival proteins. Positions 531–745 (RAFQTVVLDP…LRYRCNDTIP (215 aa)) constitute a TSP C-terminal domain. N-linked (GlcNAc...) asparagine glycosylation is present at Asn-741.

It belongs to the thrombospondin family. In terms of assembly, pentamer; disulfide-linked. Exists in a more compact conformation in the presence of calcium and shows a more extended conformation in the absence of calcium. Interacts with ITGB3, ITGA5 and FN1. Binding to FN1 requires the presence of divalent cations (Ca(2+), Mg(2+) or Mn(2+)). The greatest amount of binding is seen in the presence of Mn(2+). Interacts with MATN1, MATN3, MATN4 and ACAN. Binds heparin, heparan sulfate and chondroitin sulfate. EDTA dimishes significantly its binding to ACAN and abolishes its binding to MATN3, MATN4 and chondroitin sulfate. Interacts with collagen I, II and IX, and interaction with these collagens is dependent on the presence of zinc ions. Interacts with ADAMTS12. Interacts with ITGA7. Requires Ca(2+) as cofactor. Proteolytically cleaved by metalloproteases ADAMTS4 and ADAMTS1 with ADAMTS4 showing more potent activity.

The protein localises to the secreted. The protein resides in the extracellular space. Its subcellular location is the extracellular matrix. Its function is as follows. Plays a role in the structural integrity of cartilage via its interaction with other extracellular matrix proteins such as the collagens and fibronectin. Can mediate the interaction of chondrocytes with the cartilage extracellular matrix through interaction with cell surface integrin receptors. Could play a role in the pathogenesis of osteoarthritis. Potent suppressor of apoptosis in both primary chondrocytes and transformed cells. Suppresses apoptosis by blocking the activation of caspase-3 and by inducing the IAP family of survival proteins (BIRC3, BIRC2, BIRC5 and XIAP). Essential for maintaining a vascular smooth muscle cells (VSMCs) contractile/differentiated phenotype under physiological and pathological stimuli. Maintains this phenotype of VSMCs by interacting with ITGA7. The sequence is that of Cartilage oligomeric matrix protein (COMP) from Bos taurus (Bovine).